The primary structure comprises 473 residues: Photosystem II CP43 reaction center protein (473 aa).

A propeptide spanning residues M1–E14 is cleaved from the precursor. T15 is subject to N-acetylthreonine. T15 is modified (phosphothreonine). 5 helical membrane-spanning segments follow: residues L69–A93, L134–N155, K178–D200, K255–S275, and W291–S312. E367 contributes to the [CaMn4O5] cluster binding site. Residues R447–P471 form a helical membrane-spanning segment.

It belongs to the PsbB/PsbC family. PsbC subfamily. PSII is composed of 1 copy each of membrane proteins PsbA, PsbB, PsbC, PsbD, PsbE, PsbF, PsbH, PsbI, PsbJ, PsbK, PsbL, PsbM, PsbT, PsbX, PsbY, PsbZ, Psb30/Ycf12, at least 3 peripheral proteins of the oxygen-evolving complex and a large number of cofactors. It forms dimeric complexes. Binds multiple chlorophylls and provides some of the ligands for the Ca-4Mn-5O cluster of the oxygen-evolving complex. It may also provide a ligand for a Cl- that is required for oxygen evolution. PSII binds additional chlorophylls, carotenoids and specific lipids. serves as cofactor.

Its subcellular location is the plastid. It localises to the chloroplast thylakoid membrane. One of the components of the core complex of photosystem II (PSII). It binds chlorophyll and helps catalyze the primary light-induced photochemical processes of PSII. PSII is a light-driven water:plastoquinone oxidoreductase, using light energy to abstract electrons from H(2)O, generating O(2) and a proton gradient subsequently used for ATP formation. This chain is Photosystem II CP43 reaction center protein, found in Guillardia theta (Cryptophyte).